The primary structure comprises 106 residues: Large ribosomal subunit protein eL42 (106 aa).

A disordered region spans residues 37–56 (SQGKRRYDRKQSGYGGQTKP).

Belongs to the eukaryotic ribosomal protein eL42 family.

The chain is Large ribosomal subunit protein eL42 (RPL44) from Pichia kudriavzevii (Yeast).